The following is a 657-amino-acid chain: tRNA 5-methylaminomethyl-2-thiouridine biosynthesis bifunctional protein MnmC (657 aa).

The segment at 1 to 239 (MTDRIVPATL…KRAMLVGEFA (239 aa)) is tRNA (mnm(5)s(2)U34)-methyltransferase. Positions 263–657 (IGAGLAGCAV…VRALRHGRVA (395 aa)) are FAD-dependent cmnm(5)s(2)U34 oxidoreductase.

This sequence in the N-terminal section; belongs to the methyltransferase superfamily. tRNA (mnm(5)s(2)U34)-methyltransferase family. The protein in the C-terminal section; belongs to the DAO family. FAD serves as cofactor.

The protein resides in the cytoplasm. It catalyses the reaction 5-aminomethyl-2-thiouridine(34) in tRNA + S-adenosyl-L-methionine = 5-methylaminomethyl-2-thiouridine(34) in tRNA + S-adenosyl-L-homocysteine + H(+). Functionally, catalyzes the last two steps in the biosynthesis of 5-methylaminomethyl-2-thiouridine (mnm(5)s(2)U) at the wobble position (U34) in tRNA. Catalyzes the FAD-dependent demodification of cmnm(5)s(2)U34 to nm(5)s(2)U34, followed by the transfer of a methyl group from S-adenosyl-L-methionine to nm(5)s(2)U34, to form mnm(5)s(2)U34. This chain is tRNA 5-methylaminomethyl-2-thiouridine biosynthesis bifunctional protein MnmC, found in Burkholderia mallei (strain SAVP1).